The following is a 252-amino-acid chain: tRNA (guanine-N(7)-)-methyltransferase (252 aa).

Glutamate 51, aspartate 76, asparagine 103, and aspartate 125 together coordinate S-adenosyl-L-methionine. Aspartate 125 is an active-site residue. Residues lysine 129, aspartate 159, and 199–202 (TYYE) contribute to the substrate site.

Belongs to the class I-like SAM-binding methyltransferase superfamily. TrmB family.

It carries out the reaction guanosine(46) in tRNA + S-adenosyl-L-methionine = N(7)-methylguanosine(46) in tRNA + S-adenosyl-L-homocysteine. The protein operates within tRNA modification; N(7)-methylguanine-tRNA biosynthesis. Functionally, catalyzes the formation of N(7)-methylguanine at position 46 (m7G46) in tRNA. This is tRNA (guanine-N(7)-)-methyltransferase from Bacteroides fragilis (strain YCH46).